A 524-amino-acid chain; its full sequence is GMP synthase [glutamine-hydrolyzing] (524 aa).

The Glutamine amidotransferase type-1 domain occupies 8–206 (RILILDFGSQ…IYDICGCEAL (199 aa)). C85 serves as the catalytic Nucleophile. Catalysis depends on residues H180 and E182. The GMPS ATP-PPase domain maps to 207–399 (WEPRHIIAKS…LGLPFELVYR (193 aa)). Residue 234-240 (SGGVDSS) coordinates ATP.

In terms of assembly, homodimer.

The catalysed reaction is XMP + L-glutamine + ATP + H2O = GMP + L-glutamate + AMP + diphosphate + 2 H(+). It functions in the pathway purine metabolism; GMP biosynthesis; GMP from XMP (L-Gln route): step 1/1. Functionally, catalyzes the synthesis of GMP from XMP. The polypeptide is GMP synthase [glutamine-hydrolyzing] (Nitrosococcus oceani (strain ATCC 19707 / BCRC 17464 / JCM 30415 / NCIMB 11848 / C-107)).